A 147-amino-acid chain; its full sequence is MYFFIFLKKGQHYLKSWPLESKLGMIFPENRVIKATLFAQKFMPFLAVFAITWQQVYAKSDISALAIAVFSAIVALLIPLQGLYWLGKRSITPLSPQSAVWFYEICERLKQVNETLPILTEQPNYQNLADVLKKAQRKLDKAFWQEL.

Helical transmembrane passes span 32 to 52 (VIKA…FAIT) and 65 to 85 (LAIA…GLYW).

It belongs to the UPF0208 family.

It localises to the cell inner membrane. In Pasteurella multocida (strain Pm70), this protein is UPF0208 membrane protein PM0703.